Consider the following 146-residue polypeptide: Hemoglobin A/D subunit beta (146 aa).

The region spanning 2 to 146 is the Globin domain; the sequence is HWTSEEKQYI…VAHALALGYH (145 aa). The heme b site is built by His63 and His92.

The protein belongs to the globin family. Hemoglobins A and D are heterotetramers of alpha-1, alpha-2 and two identical beta chains. Red blood cells.

In terms of biological role, involved in oxygen transport from the lung to the various peripheral tissues. The sequence is that of Hemoglobin A/D subunit beta from Aldabrachelys gigantea (Aldabra giant tortoise).